The chain runs to 29 residues: Brevinin-2Rc (29 aa).

A disulfide bridge links cysteine 23 with cysteine 29.

Expressed by the skin glands.

It is found in the secreted. Antimicrobial peptide. The protein is Brevinin-2Rc of Pelophylax ridibundus (Marsh frog).